The primary structure comprises 370 residues: Flagellar P-ring protein (370 aa).

Positions 1–28 are cleaved as a signal peptide; sequence MTFFTRCFRRGALLFLLAVLLLPSPAQA.

Belongs to the FlgI family. In terms of assembly, the basal body constitutes a major portion of the flagellar organelle and consists of four rings (L,P,S, and M) mounted on a central rod.

Its subcellular location is the periplasm. The protein resides in the bacterial flagellum basal body. In terms of biological role, assembles around the rod to form the L-ring and probably protects the motor/basal body from shearing forces during rotation. This is Flagellar P-ring protein from Oleidesulfovibrio alaskensis (strain ATCC BAA-1058 / DSM 17464 / G20) (Desulfovibrio alaskensis).